A 407-amino-acid chain; its full sequence is Cation efflux system protein CusB (407 aa).

Residues Met-1 to Ala-28 form the signal peptide.

This sequence belongs to the membrane fusion protein (MFP) (TC 8.A.1) family. In terms of assembly, the cus efflux system is composed of CusA, CusB, CusC and CusF.

In terms of biological role, part of a cation efflux system that mediates resistance to copper and silver. The polypeptide is Cation efflux system protein CusB (cusB) (Escherichia coli (strain K12)).